Consider the following 127-residue polypeptide: Glycine cleavage system H protein (127 aa).

A Lipoyl-binding domain is found at 22–104 (AVVIGITHFA…YEGAWMVKVE (83 aa)). Position 63 is an N6-lipoyllysine (K63).

This sequence belongs to the GcvH family. In terms of assembly, the glycine cleavage system is composed of four proteins: P, T, L and H. It depends on (R)-lipoate as a cofactor.

Its function is as follows. The glycine cleavage system catalyzes the degradation of glycine. The H protein shuttles the methylamine group of glycine from the P protein to the T protein. Functionally, is also involved in protein lipoylation via its role as an octanoyl/lipoyl carrier protein intermediate. The protein is Glycine cleavage system H protein of Bacillus mycoides (strain KBAB4) (Bacillus weihenstephanensis).